Consider the following 190-residue polypeptide: MAAWGRRRLGPGGGGSRERVSLSATDCYIVHEIYSGENAQDQFEYELEQALEAQYKYIVIEPTRIGDETARWITVGNCLHKTAVLAGTACLFTPLALPLDYSHYISLPAGVLSLACCTLYGISWQFDPCCKYQVEYDAYKLSRLPLHTLTSSTPVVLVRKDDLHRKRLHNTIALAALVYCVKKVYELYAV.

Helical transmembrane passes span 84 to 100 (VLAG…LPLD) and 107 to 124 (LPAG…GISW).

Belongs to the TMEM11 family. Associates with the mitochondrial contact site and cristae organizing system (MICOS) complex, composed of at least MICOS10/MIC10, CHCHD3/MIC19, CHCHD6/MIC25, APOOL/MIC27, IMMT/MIC60, APOO/MIC23/MIC26 and QIL1/MIC13. This complex was also known under the names MINOS or MitOS complex. The MICOS complex associates with mitochondrial outer membrane proteins SAMM50, MTX1, MTX2 and DNAJC11, mitochondrial inner membrane protein TMEM11 and with HSPA9. Interacts with IMMT/MIC60.

It localises to the mitochondrion inner membrane. Plays a role in mitochondrial morphogenesis. The sequence is that of Transmembrane protein 11, mitochondrial (Tmem11) from Mus musculus (Mouse).